A 247-amino-acid polypeptide reads, in one-letter code: C-type lectin domain family 7 member A (247 aa).

Residues 1–44 (MEYQSSVENLDEDGYTQLDFSSRNITRRSVVSEKGLCAASSHWR) are Cytoplasmic-facing. Positions 15–18 (YTQL) match the ITAM-like motif. Residues 45 to 65 (LIAVTLGILCSVMLVITVVLS) form a helical; Signal-anchor for type II membrane protein membrane-spanning segment. Topologically, residues 66 to 247 (TSGIWRSSSG…YSICEKKLSV (182 aa)) are extracellular. The segment covering 81–101 (SDSFPSRNKDNQSQPTQSSLE) has biased composition (polar residues). The disordered stretch occupies residues 81–103 (SDSFPSRNKDNQSQPTQSSLEDS). A glycan (N-linked (GlcNAc...) asparagine) is linked at asparagine 91. 3 disulfides stabilise this stretch: cysteine 120-cysteine 131, cysteine 148-cysteine 241, and cysteine 220-cysteine 233. Residues 127–242 (HEDSCYLFST…CSVHSYSICE (116 aa)) enclose the C-type lectin domain. Position 146 to 153 (146 to 153 (RQCFQLGS)) interacts with (1,3-beta-D-glucosyl)n. The a divalent metal cation site is built by lysine 157, aspartate 159, and glutamate 163. Glutamate 195 contributes to the (1,3-beta-D-glucosyl)n binding site. Position 242 (glutamate 242) interacts with a divalent metal cation.

Homodimer. Interacts with SYK; participates in leukocyte activation in presence of fungal pathogens. Interacts with CD37; this interaction controls CLEC7A-mediated IL-6 production. Phosphorylated on tyrosine residues in response to beta-glucan binding. In terms of tissue distribution, detected in bone marrow, monocytes, macrophages, dendritic cells and natural killer cells.

It is found in the cell membrane. Its function is as follows. Lectin that functions as a pattern recognizing receptor (PRR) specific for beta-1,3-linked and beta-1,6-linked glucans, which constitute cell wall constituents from pathogenic bacteria and fungi. Necessary for the TLR2-mediated inflammatory response and activation of NF-kappa-B: upon beta-glucan binding, recruits SYK via its ITAM motif and promotes a signaling cascade that activates some CARD domain-BCL10-MALT1 (CBM) signalosomes, leading to the activation of NF-kappa-B and MAP kinase p38 (MAPK11, MAPK12, MAPK13 and/or MAPK14) pathways which stimulate expression of genes encoding pro-inflammatory cytokines and chemokines. Enhances cytokine production in macrophages and dendritic cells. Mediates production of reactive oxygen species in the cell. Mediates phagocytosis of C.albicans conidia. Binds T-cells in a way that does not involve their surface glycans and plays a role in T-cell activation. Stimulates T-cell proliferation. Induces phosphorylation of SCIMP after binding beta-glucans. This Bos taurus (Bovine) protein is C-type lectin domain family 7 member A (CLEC7A).